A 715-amino-acid chain; its full sequence is Elongation factor G (715 aa).

In terms of domain architecture, tr-type G spans Asn8–Thr290. Residues Ala17–Thr24, Asp88–His92, and Asn142–Asp145 each bind GTP.

Belongs to the TRAFAC class translation factor GTPase superfamily. Classic translation factor GTPase family. EF-G/EF-2 subfamily.

Its subcellular location is the cytoplasm. In terms of biological role, catalyzes the GTP-dependent ribosomal translocation step during translation elongation. During this step, the ribosome changes from the pre-translocational (PRE) to the post-translocational (POST) state as the newly formed A-site-bound peptidyl-tRNA and P-site-bound deacylated tRNA move to the P and E sites, respectively. Catalyzes the coordinated movement of the two tRNA molecules, the mRNA and conformational changes in the ribosome. In Pseudomonas fluorescens (strain ATCC BAA-477 / NRRL B-23932 / Pf-5), this protein is Elongation factor G.